The chain runs to 570 residues: Probable D-xylulose kinase A (570 aa).

Substrate is bound by residues His-98, Asp-279, and Asn-280. Residues Trp-363, 470 to 471, and Asn-474 each bind ATP; that span reads GG.

Belongs to the FGGY kinase family.

Its subcellular location is the cytoplasm. It carries out the reaction D-xylulose + ATP = D-xylulose 5-phosphate + ADP + H(+). Its function is as follows. Highly specific D-xylulose kinase which participates in the catabolism of xylose. Xylose is a major component of hemicelluloses such as xylan. Most fungi utilize D-xylose via three enzymatic reactions, xylose reductase (XR), xylitol dehydrogenase (XDH), and xylulokinase, to form xylulose 5-phosphate, which enters pentose phosphate pathway. The polypeptide is Probable D-xylulose kinase A (xkiA) (Arthroderma otae (strain ATCC MYA-4605 / CBS 113480) (Microsporum canis)).